The chain runs to 460 residues: Ribosomal protein uS12 methylthiotransferase RimO (460 aa).

An MTTase N-terminal domain is found at 17–128 (PAVAVLHLGC…IVQVIQRAER (112 aa)). [4Fe-4S] cluster-binding residues include C26, C62, C91, C166, C170, and C173. Residues 152 to 381 (TTHAPVAYLR…MQLQQGIAFR (230 aa)) enclose the Radical SAM core domain. Residues 384 to 450 (REQVGQVVPV…PYDLFGQVVE (67 aa)) enclose the TRAM domain.

The protein belongs to the methylthiotransferase family. RimO subfamily. The cofactor is [4Fe-4S] cluster.

The protein localises to the cytoplasm. It catalyses the reaction L-aspartate(89)-[ribosomal protein uS12]-hydrogen + (sulfur carrier)-SH + AH2 + 2 S-adenosyl-L-methionine = 3-methylsulfanyl-L-aspartate(89)-[ribosomal protein uS12]-hydrogen + (sulfur carrier)-H + 5'-deoxyadenosine + L-methionine + A + S-adenosyl-L-homocysteine + 2 H(+). Catalyzes the methylthiolation of an aspartic acid residue of ribosomal protein uS12. In Synechococcus sp. (strain JA-3-3Ab) (Cyanobacteria bacterium Yellowstone A-Prime), this protein is Ribosomal protein uS12 methylthiotransferase RimO.